Consider the following 447-residue polypeptide: Phosphatidylinositol N-acetylglucosaminyltransferase subunit A (447 aa).

At 1-387 (MAEPPKLRVL…NRSLLERLMR (387 aa)) the chain is on the cytoplasmic side. The chain crosses the membrane as a helical span at residues 388–408 (FLSCGAWAGKLFCMVMILDYL). Residues 409–447 (LWRLLQLLQPDEDIEEAPDICLCHHRGVEVSEGLRKKIK) are Lumenal-facing.

This sequence belongs to the glycosyltransferase group 1 family. Glycosyltransferase 4 subfamily. Expressed in roots, stems, leaves, flowers and pollen grains.

Its subcellular location is the endoplasmic reticulum membrane. The enzyme catalyses a 1,2-diacyl-sn-glycero-3-phospho-(1D-myo-inositol) + UDP-N-acetyl-alpha-D-glucosamine = a 6-(N-acetyl-alpha-D-glucosaminyl)-1-(1,2-diacyl-sn-glycero-3-phospho)-1D-myo-inositol + UDP + H(+). It participates in glycolipid biosynthesis; glycosylphosphatidylinositol-anchor biosynthesis. In terms of biological role, necessary for the synthesis of N-acetylglucosaminyl-phosphatidylinositol, the very early intermediate in GPI-anchor biosynthesis. Required for pollen germination and pollen tube growth. The sequence is that of Phosphatidylinositol N-acetylglucosaminyltransferase subunit A from Arabidopsis thaliana (Mouse-ear cress).